The sequence spans 35 residues: Conotoxin TxMEKL-0422 (35 aa).

Residues 1 to 35 (NPASCCSCADVDPGRASRKTPKGEDQVFIKEKDRC) form a disordered region. Residues 21 to 35 (PKGEDQVFIKEKDRC) show a composition bias toward basic and acidic residues.

In terms of processing, contains disulfide bonds. As to expression, expressed by the venom duct.

It localises to the secreted. In Conus textile (Cloth-of-gold cone), this protein is Conotoxin TxMEKL-0422.